The chain runs to 304 residues: Ribosomal RNA small subunit methyltransferase H (304 aa).

S-adenosyl-L-methionine is bound by residues Gly50–His52, Asp69, Phe97, Asp113, and Gln120.

This sequence belongs to the methyltransferase superfamily. RsmH family.

The protein localises to the cytoplasm. It carries out the reaction cytidine(1402) in 16S rRNA + S-adenosyl-L-methionine = N(4)-methylcytidine(1402) in 16S rRNA + S-adenosyl-L-homocysteine + H(+). Specifically methylates the N4 position of cytidine in position 1402 (C1402) of 16S rRNA. The polypeptide is Ribosomal RNA small subunit methyltransferase H (Rippkaea orientalis (strain PCC 8801 / RF-1) (Cyanothece sp. (strain PCC 8801))).